The primary structure comprises 132 residues: MKRLLSWLTGALVMAGLLSSLVLPSAVYAEEDLLGKYSGSEIRNVVDDKIAEREGKVDLNNSSVRRFQQFPGMYPTMAGKIVLGGPYNNVDDVLELDLSERQKELFAKYRDNFTVTPPSIALNEGDDRINDG.

The signal sequence occupies residues 1–29 (MKRLLSWLTGALVMAGLLSSLVLPSAVYA).

The protein belongs to the PsbU family. As to quaternary structure, PSII is composed of 1 copy each of membrane proteins PsbA, PsbB, PsbC, PsbD, PsbE, PsbF, PsbH, PsbI, PsbJ, PsbK, PsbL, PsbM, PsbT, PsbX, PsbY, PsbZ, Psb30/Ycf12, peripheral proteins PsbO, CyanoQ (PsbQ), PsbU, PsbV and a large number of cofactors. It forms dimeric complexes.

It localises to the cellular thylakoid membrane. In terms of biological role, one of the extrinsic, lumenal subunits of photosystem II (PSII). PSII is a light-driven water plastoquinone oxidoreductase, using light energy to abstract electrons from H(2)O, generating a proton gradient subsequently used for ATP formation. The extrinsic proteins stabilize the structure of photosystem II oxygen-evolving complex (OEC), the ion environment of oxygen evolution and protect the OEC against heat-induced inactivation. In Synechococcus sp. (strain CC9902), this protein is Photosystem II extrinsic protein U.